We begin with the raw amino-acid sequence, 392 residues long: Nicotinate phosphoribosyltransferase (392 aa).

Residue His214 is modified to Phosphohistidine; by autocatalysis.

Belongs to the NAPRTase family. In terms of processing, transiently phosphorylated on a His residue during the reaction cycle. Phosphorylation strongly increases the affinity for substrates and increases the rate of nicotinate D-ribonucleotide production. Dephosphorylation regenerates the low-affinity form of the enzyme, leading to product release.

The catalysed reaction is nicotinate + 5-phospho-alpha-D-ribose 1-diphosphate + ATP + H2O = nicotinate beta-D-ribonucleotide + ADP + phosphate + diphosphate. The protein operates within cofactor biosynthesis; NAD(+) biosynthesis; nicotinate D-ribonucleotide from nicotinate: step 1/1. Its function is as follows. Catalyzes the synthesis of beta-nicotinate D-ribonucleotide from nicotinate and 5-phospho-D-ribose 1-phosphate at the expense of ATP. The polypeptide is Nicotinate phosphoribosyltransferase (Xanthomonas axonopodis pv. citri (strain 306)).